Reading from the N-terminus, the 409-residue chain is Arginine biosynthesis bifunctional protein ArgJ (409 aa).

Substrate-binding residues include Thr-156, Lys-182, Thr-193, Glu-280, Asn-404, and Ser-409. The active-site Nucleophile is Thr-193.

It belongs to the ArgJ family. Heterotetramer of two alpha and two beta chains.

The protein resides in the cytoplasm. It catalyses the reaction N(2)-acetyl-L-ornithine + L-glutamate = N-acetyl-L-glutamate + L-ornithine. It carries out the reaction L-glutamate + acetyl-CoA = N-acetyl-L-glutamate + CoA + H(+). It functions in the pathway amino-acid biosynthesis; L-arginine biosynthesis; L-ornithine and N-acetyl-L-glutamate from L-glutamate and N(2)-acetyl-L-ornithine (cyclic): step 1/1. Its pathway is amino-acid biosynthesis; L-arginine biosynthesis; N(2)-acetyl-L-ornithine from L-glutamate: step 1/4. In terms of biological role, catalyzes two activities which are involved in the cyclic version of arginine biosynthesis: the synthesis of N-acetylglutamate from glutamate and acetyl-CoA as the acetyl donor, and of ornithine by transacetylation between N(2)-acetylornithine and glutamate. This Ralstonia nicotianae (strain ATCC BAA-1114 / GMI1000) (Ralstonia solanacearum) protein is Arginine biosynthesis bifunctional protein ArgJ.